Here is a 649-residue protein sequence, read N- to C-terminus: Acetyl-coenzyme A synthetase (649 aa).

Residues 191-194 (RGGR), Thr-311, and Asn-335 each bind CoA. ATP-binding positions include 387–389 (GEP), 411–416 (DTWWQT), Asp-500, and Arg-515. A CoA-binding site is contributed by Ser-523. ATP is bound at residue Arg-526. The Mg(2+) site is built by Val-537, His-539, and Ile-542. Arg-584 contributes to the CoA binding site. Lys-609 carries the N6-acetyllysine modification.

It belongs to the ATP-dependent AMP-binding enzyme family. Mg(2+) serves as cofactor. Post-translationally, acetylated. Deacetylation by the SIR2-homolog deacetylase activates the enzyme.

It catalyses the reaction acetate + ATP + CoA = acetyl-CoA + AMP + diphosphate. Functionally, catalyzes the conversion of acetate into acetyl-CoA (AcCoA), an essential intermediate at the junction of anabolic and catabolic pathways. AcsA undergoes a two-step reaction. In the first half reaction, AcsA combines acetate with ATP to form acetyl-adenylate (AcAMP) intermediate. In the second half reaction, it can then transfer the acetyl group from AcAMP to the sulfhydryl group of CoA, forming the product AcCoA. The protein is Acetyl-coenzyme A synthetase of Psychromonas ingrahamii (strain DSM 17664 / CCUG 51855 / 37).